A 376-amino-acid chain; its full sequence is Multiphosphoryl transfer protein (376 aa).

One can recognise a PTS EIIA type-2 domain in the interval 2 to 142; it reads FQLSVQDIHP…EELRALLMGE (141 aa). Catalysis depends on histidine 62, which acts as the Tele-phosphohistidine intermediate; for EIIA activity. At histidine 62 the chain carries Phosphohistidine; by HPr. Residues 156–284 form a m domain region; that stretch reads TLDVIASSLV…LTSDDALTDD (129 aa). The region spanning 285–375 is the HPr domain; that stretch reads VLSAEFVVRN…DAIAAGLGEG (91 aa). Residue histidine 299 is the Pros-phosphohistidine intermediate; for HPr activity of the active site. Histidine 299 carries the phosphohistidine; by EI modification.

The protein localises to the cytoplasm. Functionally, the phosphoenolpyruvate-dependent sugar phosphotransferase system (sugar PTS), a major carbohydrate active transport system, catalyzes the phosphorylation of incoming sugar substrates concomitantly with their translocation across the cell membrane. The enzyme II FruAB PTS system is involved in fructose transport. This Salmonella typhimurium (strain LT2 / SGSC1412 / ATCC 700720) protein is Multiphosphoryl transfer protein (fruB).